We begin with the raw amino-acid sequence, 246 residues long: Polyhedrin (246 aa).

The protein belongs to the polyhedrin family.

Functionally, major component of the virus occlusion bodies, which are large proteinaceous structures (polyhedra), that protect the virus from the outside environment for extended periods until they are ingested by insect larvae. The sequence is that of Polyhedrin (PH) from Mamestra brassicae nuclear polyhedrosis virus (MbNPV).